The following is a 470-amino-acid chain: Carboxypeptidase Q (470 aa).

The first 18 residues, Met1 to Gly18, serve as a signal peptide directing secretion. A propeptide spanning residues Lys19–Glu42 is cleaved from the precursor. A glycan (N-linked (GlcNAc...) asparagine) is linked at Asn59. Zn(2+) contacts are provided by His288 and Asp300. Glu334 (nucleophile) is an active-site residue. A Zn(2+)-binding site is contributed by Glu335. Asn351 is a glycosylation site (N-linked (GlcNAc...) asparagine). Asp362 lines the Zn(2+) pocket. The N-linked (GlcNAc...) asparagine glycan is linked to Asn394. Residue His432 participates in Zn(2+) binding.

The protein belongs to the peptidase M28 family. As to quaternary structure, homodimer. The monomeric form is inactive while the homodimer is active. In terms of processing, N-glycosylated. The secreted form is modified by hybrid or complex type oligosaccharide chains.

The protein resides in the endoplasmic reticulum. It localises to the golgi apparatus. Its subcellular location is the lysosome. The protein localises to the secreted. Functionally, carboxypeptidase that may play an important role in the hydrolysis of circulating peptides. Catalyzes the hydrolysis of dipeptides with unsubstituted terminals into amino acids. May play a role in the liberation of thyroxine hormone from its thyroglobulin (Tg) precursor. The protein is Carboxypeptidase Q (Cpq) of Mus musculus (Mouse).